A 328-amino-acid chain; its full sequence is Nickel import system permease protein NikB (328 aa).

Transmembrane regions (helical) follow at residues leucine 11–leucine 31, leucine 104–isoleucine 124, valine 139–isoleucine 159, isoleucine 170–isoleucine 190, isoleucine 229–valine 249, and valine 279–leucine 299. An ABC transmembrane type-1 domain is found at alanine 100–threonine 297.

The protein belongs to the binding-protein-dependent transport system permease family. OppBC subfamily. In terms of assembly, the complex is composed of two ATP-binding proteins (NikD and NikE), two transmembrane proteins (NikB and NikC) and a solute-binding protein (NikA).

The protein localises to the cell membrane. Its function is as follows. Part of the ABC transporter complex NikABCDE (Opp2) involved in nickel import. Probably responsible for the translocation of the substrate across the membrane. This Staphylococcus aureus (strain MRSA252) protein is Nickel import system permease protein NikB.